We begin with the raw amino-acid sequence, 207 residues long: Ras-related protein RABH1e (207 aa).

16-23 (GDQSVGKT) contacts GTP. Positions 38 to 46 (YQATIGIDF) match the Effector region motif. GTP is bound by residues 64–68 (DTAGQ), 122–125 (NKTD), and 152–153 (SA). S-geranylgeranyl cysteine attachment occurs at residues cysteine 205 and cysteine 207. Cysteine 207 carries the post-translational modification Cysteine methyl ester.

Belongs to the small GTPase superfamily. Rab family.

The protein resides in the golgi apparatus membrane. Protein transport. Regulator of membrane traffic from the Golgi apparatus towards the endoplasmic reticulum (ER). The sequence is that of Ras-related protein RABH1e (RABH1E) from Arabidopsis thaliana (Mouse-ear cress).